A 200-amino-acid polypeptide reads, in one-letter code: Large ribosomal subunit protein uL4 (200 aa).

The disordered stretch occupies residues 43–71 (RAQKTRAEVSGSGKKPWRQKGTGRARSGD).

It belongs to the universal ribosomal protein uL4 family. In terms of assembly, part of the 50S ribosomal subunit.

One of the primary rRNA binding proteins, this protein initially binds near the 5'-end of the 23S rRNA. It is important during the early stages of 50S assembly. It makes multiple contacts with different domains of the 23S rRNA in the assembled 50S subunit and ribosome. Functionally, forms part of the polypeptide exit tunnel. The chain is Large ribosomal subunit protein uL4 from Aggregatibacter actinomycetemcomitans (Actinobacillus actinomycetemcomitans).